We begin with the raw amino-acid sequence, 99 residues long: uncharacterized protein (99 aa).

A helical transmembrane segment spans residues phenylalanine 74 to tryptophan 90.

The protein localises to the membrane. This is an uncharacterized protein from Saccharomyces cerevisiae (strain ATCC 204508 / S288c) (Baker's yeast).